We begin with the raw amino-acid sequence, 193 residues long: Large ribosomal subunit protein bL25 (193 aa).

The protein belongs to the bacterial ribosomal protein bL25 family. CTC subfamily. As to quaternary structure, part of the 50S ribosomal subunit; part of the 5S rRNA/L5/L18/L25 subcomplex. Contacts the 5S rRNA. Binds to the 5S rRNA independently of L5 and L18.

Functionally, this is one of the proteins that binds to the 5S RNA in the ribosome where it forms part of the central protuberance. This is Large ribosomal subunit protein bL25 from Hydrogenovibrio crunogenus (strain DSM 25203 / XCL-2) (Thiomicrospira crunogena).